A 342-amino-acid chain; its full sequence is MSAAGGLLARLETRVTREWQRRSAFAWALTPFACAFGLCAALRRTAYARGWKQAVDVGVPVVVVGNVTVGGTGKTPTVIALVDALRAAGFTPGVVSRGYGANVKTPTAVTPASRAGAAGDEPLLIARRTGAPVWVCPDRVAAAQALRAAHPDVDVIVSDDGLQHYRLARTVELVVFDHRLGGNGFLLPAGPLREPLSRHRDATLVNDPYSGALPPWPDTYSLALTPGAAWHLDQPTLRRPLSQFANERVLAAAGIGAPERFFATLRAAGLAPATRALPDHYAFADNPFVDDAVDAILITEKDAVKLGASWRDARLWVVPVEAALDPRLIALVVEKLRGRSPA.

68 to 75 (TVGGTGKT) is a binding site for ATP.

It belongs to the LpxK family.

The catalysed reaction is a lipid A disaccharide + ATP = a lipid IVA + ADP + H(+). The protein operates within glycolipid biosynthesis; lipid IV(A) biosynthesis; lipid IV(A) from (3R)-3-hydroxytetradecanoyl-[acyl-carrier-protein] and UDP-N-acetyl-alpha-D-glucosamine: step 6/6. Functionally, transfers the gamma-phosphate of ATP to the 4'-position of a tetraacyldisaccharide 1-phosphate intermediate (termed DS-1-P) to form tetraacyldisaccharide 1,4'-bis-phosphate (lipid IVA). In Burkholderia multivorans (strain ATCC 17616 / 249), this protein is Tetraacyldisaccharide 4'-kinase.